The sequence spans 306 residues: Plant-type L-asparaginase (306 aa).

Residue Thr176 is the Nucleophile of the active site. Residues 203 to 206 (RVGD) and 225 to 228 (TGLG) contribute to the substrate site.

It belongs to the Ntn-hydrolase family. Heterotetramer of two alpha and two beta chains arranged as a dimer of alpha/beta heterodimers. The uncleaved protein forms homodimers. In terms of processing, autocleaved. Generates the alpha and beta subunits. The N-terminal residue of the beta subunit is thought to be responsible for the nucleophile hydrolase activity. Predominantly produced in the uncleaved form when gene expression is induced at 37 degrees Celsius with 0.5 mM IPTG. When produced at 42 degrees Celsius without adding IPTG, approximately 90% of the protein is found in the cleaved form, while the remaining 10% is observed as uncleaved precursor. Undergoes complete auto-cleavage within 24 hours at 37 degrees Celsius.

The enzyme catalyses L-asparagine + H2O = L-aspartate + NH4(+). Undergoes auto-cleavage in a temperature-dependent and glycine-independent manner. Metal ions and EDTA do not have any significant effect on enzyme activity, indicating that activity is metal-independent. In terms of biological role, catalyzes the hydrolysis of L-asparagine into L-aspartate and ammonia. Also displays D-asparaginase activity, which is about 10% of the L-asparaginase activity. Does not exhibit glutaminase activity. In Thermococcus kodakarensis (strain ATCC BAA-918 / JCM 12380 / KOD1) (Pyrococcus kodakaraensis (strain KOD1)), this protein is Plant-type L-asparaginase.